The chain runs to 3071 residues: Intermembrane lipid transfer protein vps1301 (3071 aa).

The 114-residue stretch at 2-115 (LEGLVAGLLN…QQALKQEQLD (114 aa)) folds into the Chorein N-terminal domain. Positions 2143–2415 (HIEIFSPYII…KYSWDYPCCA (273 aa)) constitute an SHR-BD domain.

The protein belongs to the VPS13 family.

It localises to the golgi apparatus. The protein localises to the trans-Golgi network. Mediates the transfer of lipids between membranes at organelle contact sites. May play a role in mitochondrial lipid homeostasis, Golgi vesicle transport, reticulophagy, actin cytoskeleton organization and formation of the forespore membrane. This chain is Intermembrane lipid transfer protein vps1301, found in Schizosaccharomyces pombe (strain 972 / ATCC 24843) (Fission yeast).